Reading from the N-terminus, the 290-residue chain is Shikimate dehydrogenase (NADP(+)) (290 aa).

Residues 18–20 (SYS) and Thr66 contribute to the shikimate site. Lys70 acts as the Proton acceptor in catalysis. Glu82 contacts NADP(+). Shikimate is bound by residues Asn91 and Asp106. NADP(+) is bound by residues 130 to 134 (GSGGA) and Met229. Tyr231 contributes to the shikimate binding site. Gly252 serves as a coordination point for NADP(+).

The protein belongs to the shikimate dehydrogenase family. In terms of assembly, homodimer.

The enzyme catalyses shikimate + NADP(+) = 3-dehydroshikimate + NADPH + H(+). It functions in the pathway metabolic intermediate biosynthesis; chorismate biosynthesis; chorismate from D-erythrose 4-phosphate and phosphoenolpyruvate: step 4/7. In terms of biological role, involved in the biosynthesis of the chorismate, which leads to the biosynthesis of aromatic amino acids. Catalyzes the reversible NADPH linked reduction of 3-dehydroshikimate (DHSA) to yield shikimate (SA). The protein is Shikimate dehydrogenase (NADP(+)) of Chlorobium phaeovibrioides (strain DSM 265 / 1930) (Prosthecochloris vibrioformis (strain DSM 265)).